Reading from the N-terminus, the 856-residue chain is DNA mismatch repair protein MutS (856 aa).

607-614 (GPNMAGKS) contacts ATP.

This sequence belongs to the DNA mismatch repair MutS family.

In terms of biological role, this protein is involved in the repair of mismatches in DNA. It is possible that it carries out the mismatch recognition step. This protein has a weak ATPase activity. The chain is DNA mismatch repair protein MutS from Cytophaga hutchinsonii (strain ATCC 33406 / DSM 1761 / CIP 103989 / NBRC 15051 / NCIMB 9469 / D465).